A 61-amino-acid chain; its full sequence is Small ribosomal subunit protein uS14B (61 aa).

Zn(2+) contacts are provided by Cys24, Cys27, Cys40, and Cys43.

It belongs to the universal ribosomal protein uS14 family. Zinc-binding uS14 subfamily. As to quaternary structure, part of the 30S ribosomal subunit. Contacts proteins S3 and S10. Zn(2+) is required as a cofactor.

Its function is as follows. Binds 16S rRNA, required for the assembly of 30S particles and may also be responsible for determining the conformation of the 16S rRNA at the A site. This chain is Small ribosomal subunit protein uS14B, found in Myxococcus xanthus (strain DK1622).